Reading from the N-terminus, the 174-residue chain is Neuromedin-U (174 aa).

The first 37 residues, 1–37 (MSRAAGHRPGLSAGQLAAATASPLLSLLLLLACCADA), serve as a signal peptide directing secretion. Positions 38 to 105 (CKGVPISPQR…EQSEKDNTKR (68 aa)) are excised as a propeptide. Methionine sulfoxide; partial is present on Met-141. Asn-166 is subject to Asparagine amide. The propeptide occupies 170-174 (STSFI).

This sequence belongs to the NmU family.

The protein localises to the secreted. Its function is as follows. Ligand for receptors NMUR1 and NMUR2. Stimulates muscle contractions of specific regions of the gastrointestinal tract. Does not function as a ligand for either NMUR1 or NMUR2. Indirectly induces prolactin release although its potency is much lower than that of neuromedin precursor-related peptide 36. In terms of biological role, does not function as a ligand for either NMUR1 or NMUR2. Indirectly induces prolactin release from lactotroph cells in the pituitary gland, probably via the hypothalamic dopaminergic system. Functionally, stimulates muscle contractions of specific regions of the gastrointestinal tract. The sequence is that of Neuromedin-U (Nmu) from Mus musculus (Mouse).